Consider the following 233-residue polypeptide: Demethylmenaquinone methyltransferase (233 aa).

S-adenosyl-L-methionine contacts are provided by residues Thr60, Asp81, and 106 to 107 (DA).

It belongs to the class I-like SAM-binding methyltransferase superfamily. MenG/UbiE family.

The catalysed reaction is a 2-demethylmenaquinol + S-adenosyl-L-methionine = a menaquinol + S-adenosyl-L-homocysteine + H(+). The protein operates within quinol/quinone metabolism; menaquinone biosynthesis; menaquinol from 1,4-dihydroxy-2-naphthoate: step 2/2. Its function is as follows. Methyltransferase required for the conversion of demethylmenaquinol (DMKH2) to menaquinol (MKH2). In Staphylococcus saprophyticus subsp. saprophyticus (strain ATCC 15305 / DSM 20229 / NCIMB 8711 / NCTC 7292 / S-41), this protein is Demethylmenaquinone methyltransferase.